The sequence spans 713 residues: Macrophage-expressed gene 1 protein (713 aa).

The N-terminal stretch at 1–19 (MNSFMALVLIWMIIACAEA) is a signal peptide. Residues 30–345 (GFQICKNALK…TAVRHYYTFN (316 aa)) form the MACPF domain. Residues Cys34 and Cys70 are joined by a disulfide bond. 2 beta stranded membrane-spanning segments follow: residues 113–120 (LSINTELA) and 127–132 (GKFSTE). The N-linked (GlcNAc...) asparagine glycan is linked to Asn185. 2 beta stranded membrane-spanning segments follow: residues 235-244 (TVTASAGIAF) and 248-256 (VNFKVETDY). An N-linked (GlcNAc...) asparagine glycan is attached at Asn269. Cysteines 350 and 369 form a disulfide. N-linked (GlcNAc...) asparagine glycosylation is present at Asn375. Intrachain disulfides connect Cys385–Cys394, Cys432–Cys446, Cys436–Cys442, Cys531–Cys569, and Cys554–Cys574. The segment at 410 to 653 (PPGYSPVHLL…GDSNGMSGGE (244 aa)) is P2. A helical transmembrane segment spans residues 654-674 (AAGITLGVTIALGIVITLAIY).

It belongs to the MPEG1 family. Homooligomer; predominantly forms a homooligomeric arc-shaped pore complex instead of complete rings of 16 subunits. In terms of processing, proteolytically processed in two steps to generate the Macrophage-expressed gene 1 protein, processed form: cleaved by trypsin in proximity of the helical transmembrane domain releases the ectodomain into the lysosomal lumen to orient the pore-forming domain toward the endogenous membranes, and processed by the asparagine endopeptidase (LGMN). Proteolytic processing in antigen-containing vesicles is pH-dependent. Post-translationally, monoubiquitinated in response to bacterial infection; ubiquitination is required for vesicular localization and antibacterial activity and can be blocked by bacterial cell cycle inhibiting factor (cif). Expressed constitutively in a variety of cell types including macrophages, microglia, neutrophils, T cells, marginal zone B cells, keratinocytes, splenocytes and intestinal epithelial cells.

It is found in the cytoplasmic vesicle membrane. It localises to the cytoplasmic vesicle. The protein resides in the phagosome membrane. Its activity is regulated as follows. Forms arc- and ring-shaped pre-pores on top of the membrane at neutral to slightly acidic pH conditions and converts to pores upon acidification. Undergoes transition from the pre-pore to the pore in a processive clockwise hand-over-hand process. In the pore state, 2 alpha-helical regions refold into transmembrane hairpins (TMH1 and TMH2) in each protomer that form in the ensemble complex giant beta-barrel transmembrane pores. In terms of biological role, pore-forming protein involved in both innate and adaptive immunity. Plays a central role in antigen cross-presentation in dendritic cells by forming a pore in antigen-containing compartments, thereby promoting delivery of antigens for cross-presentation. Also involved in innate immune response following bacterial infection; shows antibacterial activity against a wide spectrum of Gram-positive, Gram-negative and acid-fast bacteria. Reduces the viability of the intracytosolic pathogen L.monocytogenes by inhibiting acidification of the phagocytic vacuole of host cells which restricts bacterial translocation from the vacuole to the cytosol. Required for the antibacterial activity of reactive oxygen species and nitric oxide. Functionally, pore-forming protein that plays a central role in antigen cross-presentation in dendritic cells by mediating delivery of antigens for cross-presentation. Dendritic cells bridge innate and adaptive immunity by capturing exogenous antigens on MHC class-I molecules and presenting them to naive CD8(+) T-cells. Acts by forming a pore in antigen-containing compartments, promoting the release of antigens into the cytosol, enabling generation of MHCI:peptide complexes and T-cell priming. The chain is Macrophage-expressed gene 1 protein from Mus musculus (Mouse).